A 345-amino-acid chain; its full sequence is Annexin A9 (345 aa).

4 Annexin repeats span residues 41-112 (FSAD…ALLQ), 113-184 (PAAH…ALAK), 197-266 (NLAA…NLAS), and 270-341 (NTPL…ALCR).

Belongs to the annexin family. In terms of assembly, homodimer.

Its function is as follows. May act as a low affinity receptor for acetylcholine. The sequence is that of Annexin A9 (ANXA9) from Bos taurus (Bovine).